Consider the following 511-residue polypeptide: ATP synthase subunit alpha (511 aa).

169–176 lines the ATP pocket; it reads GDRKTGKT.

Belongs to the ATPase alpha/beta chains family. F-type ATPases have 2 components, CF(1) - the catalytic core - and CF(0) - the membrane proton channel. CF(1) has five subunits: alpha(3), beta(3), gamma(1), delta(1), epsilon(1). CF(0) has three main subunits: a(1), b(2) and c(9-12). The alpha and beta chains form an alternating ring which encloses part of the gamma chain. CF(1) is attached to CF(0) by a central stalk formed by the gamma and epsilon chains, while a peripheral stalk is formed by the delta and b chains.

It is found in the cell membrane. It carries out the reaction ATP + H2O + 4 H(+)(in) = ADP + phosphate + 5 H(+)(out). Functionally, produces ATP from ADP in the presence of a proton gradient across the membrane. The alpha chain is a regulatory subunit. In Latilactobacillus sakei subsp. sakei (strain 23K) (Lactobacillus sakei subsp. sakei), this protein is ATP synthase subunit alpha.